We begin with the raw amino-acid sequence, 722 residues long: Fatty acid oxidation complex subunit alpha (722 aa).

The segment at 1 to 189 (MIYQGKSLSA…AQGAIDAVVE (189 aa)) is enoyl-CoA hydratase/isomerase. Asp296 contributes to the substrate binding site. The 3-hydroxyacyl-CoA dehydrogenase stretch occupies residues 311–722 (TKAVNKAAVL…SYFTTDVKLA (412 aa)). NAD(+) contacts are provided by residues Met325, Asp344, 401 to 403 (VVE), Lys408, and Ser430. The active-site For 3-hydroxyacyl-CoA dehydrogenase activity is His451. Asn454 provides a ligand contact to NAD(+). Residues Asn501 and Tyr661 each contribute to the substrate site.

It in the N-terminal section; belongs to the enoyl-CoA hydratase/isomerase family. The protein in the C-terminal section; belongs to the 3-hydroxyacyl-CoA dehydrogenase family. As to quaternary structure, heterotetramer of two alpha chains (FadB) and two beta chains (FadA).

It catalyses the reaction a (3S)-3-hydroxyacyl-CoA + NAD(+) = a 3-oxoacyl-CoA + NADH + H(+). It carries out the reaction a (3S)-3-hydroxyacyl-CoA = a (2E)-enoyl-CoA + H2O. The catalysed reaction is a 4-saturated-(3S)-3-hydroxyacyl-CoA = a (3E)-enoyl-CoA + H2O. The enzyme catalyses (3S)-3-hydroxybutanoyl-CoA = (3R)-3-hydroxybutanoyl-CoA. It catalyses the reaction a (3Z)-enoyl-CoA = a 4-saturated (2E)-enoyl-CoA. It carries out the reaction a (3E)-enoyl-CoA = a 4-saturated (2E)-enoyl-CoA. It participates in lipid metabolism; fatty acid beta-oxidation. Involved in the aerobic and anaerobic degradation of long-chain fatty acids via beta-oxidation cycle. Catalyzes the formation of 3-oxoacyl-CoA from enoyl-CoA via L-3-hydroxyacyl-CoA. It can also use D-3-hydroxyacyl-CoA and cis-3-enoyl-CoA as substrate. This is Fatty acid oxidation complex subunit alpha from Colwellia psychrerythraea (strain 34H / ATCC BAA-681) (Vibrio psychroerythus).